The sequence spans 508 residues: UDP-N-acetylmuramyl-tripeptide synthetase (508 aa).

Ser35 contacts UDP-N-acetyl-alpha-D-muramoyl-L-alanyl-D-glutamate. 118–124 (GTDGKSS) is an ATP binding site. UDP-N-acetyl-alpha-D-muramoyl-L-alanyl-D-glutamate is bound by residues 163–164 (ST), Thr190, and Arg200. Lys232 is subject to N6-carboxylysine.

Belongs to the MurCDEF family. MurE subfamily. In terms of processing, carboxylation is probably crucial for Mg(2+) binding and, consequently, for the gamma-phosphate positioning of ATP.

The protein localises to the cytoplasm. It participates in cell wall biogenesis; peptidoglycan biosynthesis. In terms of biological role, catalyzes the addition of an amino acid to the nucleotide precursor UDP-N-acetylmuramoyl-L-alanyl-D-glutamate (UMAG) in the biosynthesis of bacterial cell-wall peptidoglycan. This Borreliella burgdorferi (strain ATCC 35210 / DSM 4680 / CIP 102532 / B31) (Borrelia burgdorferi) protein is UDP-N-acetylmuramyl-tripeptide synthetase.